Here is a 630-residue protein sequence, read N- to C-terminus: A-type voltage-gated potassium channel KCND2 (630 aa).

Over 1–184 the chain is Cytoplasmic; the sequence is MAAGVAAWLP…FENPHTSTMA (184 aa). Positions 2-20 are interaction with KCNIP1, KCNIP2, and other family members; it reads AAGVAAWLPFARAAAIGWM. The residue at position 38 (threonine 38) is a Phosphothreonine. The tract at residues 71–90 is interaction with KCNIP1; that stretch reads ERDFFYHPETQQYFFDRDPD. The Zn(2+) site is built by histidine 105, cysteine 111, cysteine 132, and cysteine 133. Residues 185 to 206 form a helical membrane-spanning segment; the sequence is LVFYYVTGFFIAVSVIANVVET. The Extracellular segment spans residues 207–226; that stretch reads VPCGSSPGHIKELPCGERYA. Residues 227 to 249 form a helical membrane-spanning segment; it reads VAFFCLDTACVMIFTVEYLLRLA. At 250-256 the chain is on the cytoplasmic side; that stretch reads AAPSRYR. Residues 257 to 281 traverse the membrane as a helical segment; it reads FVRSVMSIIDVVAILPYYIGLVMTD. The Extracellular portion of the chain corresponds to 282-287; sequence NEDVSG. The helical; Voltage-sensor transmembrane segment at 288–307 threads the bilayer; sequence AFVTLRVFRVFRIFKFSRHS. Residues 308-321 lie on the Cytoplasmic side of the membrane; it reads QGLRILGYTLKSCA. The interval 308-321 is S4-S5 linker; that stretch reads QGLRILGYTLKSCA. Residues 322 to 345 form a helical membrane-spanning segment; that stretch reads SELGFLLFSLTMAIIIFATVMFYA. Topologically, residues 346–357 are extracellular; the sequence is EKGSSASKFTSI. The helical intramembrane region spans 358-369; the sequence is PAAFWYTIVTMT. K(+)-binding residues include threonine 370, leucine 371, glycine 372, and tyrosine 373. Positions 370-375 match the Selectivity filter motif; it reads TLGYGD. An intramembrane segment occupies 370-377; it reads TLGYGDMV. The Extracellular segment spans residues 378–380; it reads PKT. The helical transmembrane segment at 381–403 threads the bilayer; that stretch reads IAGKIFGSICSLSGVLVIALPVP. Over 404–630 the chain is Cytoplasmic; sequence VIVSNFSRIY…GGNIVRVSAL (227 aa). Serine 438 is modified (phosphoserine). Positions 474–489 are required for dendritic targeting; that stretch reads FETQHHHLLHCLEKTT. Residues 474-630 form an important for normal channel activation and inactivation, for interaction with KCNIP2, and probably other family members as well region; sequence FETQHHHLLH…GGNIVRVSAL (157 aa). Residues serine 548, serine 552, serine 572, and serine 575 each carry the phosphoserine modification. The segment at 600 to 623 is disordered; sequence IPTPPVTTPEGDDRPESPEYSGGN. 2 positions are modified to phosphothreonine: threonine 602 and threonine 607. Serine 616 carries the phosphoserine modification. The short motif at 627-630 is the PDZ-binding element; that stretch reads VSAL.

This sequence belongs to the potassium channel family. D (Shal) (TC 1.A.1.2) subfamily. Kv4.2/KCND2 sub-subfamily. In terms of assembly, homotetramer or heterotetramer with KCND1 or KCND3. Associates with the regulatory subunits KCNIP1, KCNIP2, KCNIP3 and KCNIP4. Interacts with DPP6, DPP10, DLG4 and DLG1. In vivo, probably exists as heteromeric complex containing variable proportions of KCND1, KCND2, KCND3, KCNIP1, KCNIP2, KCNIP3, KCNIP4, DPP6 and DPP10. The tetrameric channel can associate with up to four regulatory subunits, such as KCNIP2 or KCNIP4. Interaction with KCNIP3 promotes tetramerization and formation of a functional potassium channel. Interaction with four KCNIP4 chains does not reduce interaction with DPP10. Probably part of a complex consisting of KCNIP1, KCNIP2 isoform 3 and KCND2. Interacts with FLNA and FLNC. Interacts with NCS1/FREQ. Identified in a complex with cAMP-dependent protein kinase (PKA), CAV3, AKAP6 and KCND3 in cardiac myocytes. Interacts (via S1 and S2 helices) with DPP6; this interaction stabilizes the conformation of the S1-S2 helices and facilitates S4 conformational change, including S4 sliding up and down, thereby accelerating activation, inactivation, and recovery. In terms of processing, phosphorylation at Ser-438 in response to MAPK activation is increased in stimulated dendrites. Interaction with KCNIP2 and DPP6 propomtes phosphorylation by PKA at Ser-552. Phosphorylation at Ser-552 has no effect on interaction with KCNIP3, but is required for the regulation of channel activity by KCNIP3. Phosphorylation at Ser-552 leads to KCND2 internalization. Phosphorylated by MAPK in response to signaling via the metabotropic glutamate receptor GRM5. Phosphorylation at Ser-616 is required for the down-regulation of neuronal A-type currents in response to signaling via GRM5. Detected in brain frontal cortex.

It is found in the cell membrane. The protein localises to the cell projection. It localises to the dendrite. Its subcellular location is the synapse. The protein resides in the perikaryon. It is found in the postsynaptic cell membrane. The protein localises to the dendritic spine. It localises to the sarcolemma. Its subcellular location is the cell junction. The protein resides in the membrane. It is found in the caveola. It catalyses the reaction K(+)(in) = K(+)(out). Voltage-gated potassium channel that mediates transmembrane potassium transport in excitable membranes, primarily in the brain. Mediates the major part of the dendritic A-type current I(SA) in brain neurons. This current is activated at membrane potentials that are below the threshold for action potentials. It regulates neuronal excitability, prolongs the latency before the first spike in a series of action potentials, regulates the frequency of repetitive action potential firing, shortens the duration of action potentials and regulates the back-propagation of action potentials from the neuronal cell body to the dendrites. Contributes to the regulation of the circadian rhythm of action potential firing in suprachiasmatic nucleus neurons, which regulates the circadian rhythm of locomotor activity. Functions downstream of the metabotropic glutamate receptor GRM5 and plays a role in neuronal excitability and in nociception mediated by activation of GRM5. Mediates the transient outward current I(to) in rodent heart left ventricle apex cells, but not in human heart, where this current is mediated by another family member. Forms tetrameric potassium-selective channels through which potassium ions pass in accordance with their electrochemical gradient. The channel alternates between opened and closed conformations in response to the voltage difference across the membrane. Can form functional homotetrameric channels and heterotetrameric channels that contain variable proportions of KCND2 and KCND3; channel properties depend on the type of pore-forming alpha subunits that are part of the channel. In vivo, membranes probably contain a mixture of heteromeric potassium channel complexes. Interaction with specific isoforms of the regulatory subunits KCNIP1, KCNIP2, KCNIP3 or KCNIP4 strongly increases expression at the cell surface and thereby increases channel activity; it modulates the kinetics of channel activation and inactivation, shifts the threshold for channel activation to more negative voltage values, shifts the threshold for inactivation to less negative voltages and accelerates recovery after inactivation. Likewise, interaction with DPP6 or DPP10 promotes expression at the cell membrane and regulates both channel characteristics and activity. Upon depolarization, the channel goes from a resting closed state (C state) to an activated but non-conducting state (C* state), from there, the channel may either inactivate (I state) or open (O state). This is A-type voltage-gated potassium channel KCND2 from Oryctolagus cuniculus (Rabbit).